We begin with the raw amino-acid sequence, 64 residues long: NSVHPCCDPVICEPREGEHCISGPCCENCYFLNSGTICKRARGDGNQDYCTGITPDCPRNRYNV.

The Disintegrin domain occupies 1-64 (NSVHPCCDPV…PDCPRNRYNV (64 aa)). Intrachain disulfides connect C6-C29, C20-C26, C25-C50, and C38-C57. The Cell attachment site motif lies at 42-44 (RGD).

Belongs to the disintegrin family. Dimeric disintegrin subfamily. In terms of assembly, homodimer; disulfide-linked. In terms of tissue distribution, expressed by the venom gland.

It is found in the secreted. Its function is as follows. May bind to both alpha-IIb/beta-3 (ITGA2B/ITGB3) and alpha-V/beta-3 (ITGAV/ITGB3) integrins, and may inhibit platelet aggregation. The sequence is that of Disintegrin schistatin from Echis carinatus (Saw-scaled viper).